Reading from the N-terminus, the 622-residue chain is Low affinity potassium transport system protein Kup (622 aa).

12 consecutive transmembrane segments (helical) span residues 9-29 (LPAI…TSPL), 49-69 (VFGF…IKYL), 103-123 (VIMG…TPAI), 137-157 (PQLD…LFMI), 165-185 (VGKL…GLGL), 213-233 (VSFI…ALYA), 247-267 (WFTV…ALLL), 276-296 (PFFL…AALA), 337-357 (IYIP…IVSF), 363-383 (LAAA…ILST), 396-416 (FVAL…TANL), and 419-439 (LLSG…VMTT).

It belongs to the HAK/KUP transporter (TC 2.A.72) family.

The protein localises to the cell inner membrane. It carries out the reaction K(+)(in) + H(+)(in) = K(+)(out) + H(+)(out). Responsible for the low-affinity transport of potassium into the cell. Likely operates as a K(+):H(+) symporter. In Escherichia coli (strain K12 / MC4100 / BW2952), this protein is Low affinity potassium transport system protein Kup.